A 517-amino-acid chain; its full sequence is Crotonobetaine/carnitine--CoA ligase (517 aa).

It belongs to the ATP-dependent AMP-binding enzyme family.

It carries out the reaction 4-(trimethylamino)butanoate + ATP + CoA = 4-(trimethylamino)butanoyl-CoA + AMP + diphosphate. The enzyme catalyses crotonobetaine + ATP + CoA = crotonobetainyl-CoA + AMP + diphosphate. It catalyses the reaction (R)-carnitine + ATP + CoA = (R)-carnitinyl-CoA + AMP + diphosphate. Its pathway is amine and polyamine metabolism; carnitine metabolism. Its function is as follows. Catalyzes the transfer of CoA to carnitine, generating the initial carnitinyl-CoA needed for the CaiB reaction cycle. Also has activity toward crotonobetaine and gamma-butyrobetaine. The chain is Crotonobetaine/carnitine--CoA ligase from Shigella sonnei (strain Ss046).